A 496-amino-acid polypeptide reads, in one-letter code: Probable cytosol aminopeptidase (496 aa).

Residues Lys258 and Asp263 each coordinate Mn(2+). The active site involves Lys270. Mn(2+) is bound by residues Asp281, Asp340, and Glu342. Arg344 is an active-site residue.

This sequence belongs to the peptidase M17 family. Mn(2+) is required as a cofactor.

It is found in the cytoplasm. It carries out the reaction Release of an N-terminal amino acid, Xaa-|-Yaa-, in which Xaa is preferably Leu, but may be other amino acids including Pro although not Arg or Lys, and Yaa may be Pro. Amino acid amides and methyl esters are also readily hydrolyzed, but rates on arylamides are exceedingly low.. The enzyme catalyses Release of an N-terminal amino acid, preferentially leucine, but not glutamic or aspartic acids.. Its function is as follows. Presumably involved in the processing and regular turnover of intracellular proteins. Catalyzes the removal of unsubstituted N-terminal amino acids from various peptides. The chain is Probable cytosol aminopeptidase from Helicobacter pylori (strain Shi470).